The sequence spans 157 residues: MASKCVRLLLLLSWVAGPEVLSDILRPSCASGWFNYRSHCYGYFRKLRNWSHAELECQSYGNGSHLASVLNPKEASVISKYITGYQRSLPVWIGLHDPQKNASWQWIDGSTNQYRPWSPRTKSEARHCTEMNPKDKFLTWNKNGCTKRQHFLCKYRP.

An N-terminal signal peptide occupies residues 1–22 (MASKCVRLLLLLSWVAGPEVLS). Cys29 and Cys40 are oxidised to a cystine. Residues 36-154 (YRSHCYGYFR…CTKRQHFLCK (119 aa)) form the C-type lectin domain. 3 N-linked (GlcNAc...) asparagine glycosylation sites follow: Asn49, Asn62, and Asn101. 2 disulfide bridges follow: Cys57–Cys153 and Cys128–Cys145. A carbohydrate-binding positions include 97 to 101 (DPQKN) and 134 to 136 (KDK).

It is found in the secreted. Its function is as follows. Calcium-independent lectin displaying mannose-binding specificity and able to maintain carbohydrate recognition activity in an acidic environment. May be involved in inflammatory and metaplastic responses of the gastrointestinal epithelium. This Rattus norvegicus (Rat) protein is Regenerating islet-derived protein 4 (Reg4).